The chain runs to 339 residues: Glycerol-3-phosphate dehydrogenase [NAD(P)+] (339 aa).

The NADPH site is built by S15, Y16, H36, and K110. Residues K110, G139, and T141 each contribute to the sn-glycerol 3-phosphate site. Residue A143 coordinates NADPH. Sn-glycerol 3-phosphate contacts are provided by K195, D248, S258, R259, and N260. K195 functions as the Proton acceptor in the catalytic mechanism. R259 provides a ligand contact to NADPH. Residues V283 and E285 each contribute to the NADPH site.

Belongs to the NAD-dependent glycerol-3-phosphate dehydrogenase family.

It is found in the cytoplasm. It carries out the reaction sn-glycerol 3-phosphate + NAD(+) = dihydroxyacetone phosphate + NADH + H(+). The catalysed reaction is sn-glycerol 3-phosphate + NADP(+) = dihydroxyacetone phosphate + NADPH + H(+). It participates in membrane lipid metabolism; glycerophospholipid metabolism. Its function is as follows. Catalyzes the reduction of the glycolytic intermediate dihydroxyacetone phosphate (DHAP) to sn-glycerol 3-phosphate (G3P), the key precursor for phospholipid synthesis. In Cronobacter sakazakii (strain ATCC BAA-894) (Enterobacter sakazakii), this protein is Glycerol-3-phosphate dehydrogenase [NAD(P)+].